Consider the following 1045-residue polypeptide: Protein transport protein Sec16B (1045 aa).

Residues 1 to 13 (MEPWVPQWPPPSR) are compositionally biased toward pro residues. The disordered stretch occupies residues 1 to 78 (MEPWVPQWPP…PQHVPRLGAW (78 aa)). The span at 22-33 (DSERGLQRDGYH) shows a compositional bias: basic and acidic residues. Positions 50–60 (QDVQGSPQPQQ) are enriched in polar residues. A phosphoserine mark is found at Ser-55 and Ser-137. A compositionally biased stretch (basic and acidic residues) spans 149–168 (RHLSEHRPENQSRTFRRDSE). 4 disordered regions span residues 149–193 (RHLS…QERP), 707–733 (QQKA…TTES), 748–789 (APGC…YSVP), and 813–1045 (QTHS…TQPC). Ser-186 is modified (phosphoserine). Positions 267 to 711 (APKKFYIPHV…RHQELQQKAA (445 aa)) are central conserved domain (CCD); required for localization to endoplasmic reticulum exit sites. The span at 773–784 (GPAAGPAGAPVP) shows a compositional bias: low complexity. Ser-852, Ser-858, Ser-866, and Ser-867 each carry phosphoserine. Over residues 916–926 (EDSSDSPDSEQ) the composition is skewed to acidic residues. Residues 942–953 (SPPPLLESPPLP) are compositionally biased toward pro residues. Gly residues predominate over residues 957-966 (AFGGGTGRGE). Polar residues predominate over residues 989–998 (ESASSELYSN).

Belongs to the SEC16 family. As to quaternary structure, SEC16A and SEC16B are each present in multiple copies in a heteromeric complex. Interacts with TFG. Interacts with SEC13. In terms of tissue distribution, liver.

The protein resides in the endoplasmic reticulum membrane. It is found in the golgi apparatus membrane. In terms of biological role, plays a role in the organization of the endoplasmic reticulum exit sites (ERES), also known as transitional endoplasmic reticulum (tER). Required for secretory cargo traffic from the endoplasmic reticulum to the Golgi apparatus. Involved in peroxisome biogenesis. Regulates the transport of peroxisomal biogenesis factors PEX3 and PEX16 from the ER to peroxisomes. This Oryctolagus cuniculus (Rabbit) protein is Protein transport protein Sec16B (SEC16B).